The primary structure comprises 344 residues: MSTNLSNAEILNNLLEGRDLDELTSRALMQRWLNDEISDVETGAFLSALRAKSSTGVELSSMAKELLNVCELPVARPNLYLVDTCGTGGDGANTFNISTAVAFVAASCGVKIAKHGNKSASGKVGSADVLLNLGLNLNCSLEKVINAVSEIGITFLFAPVWHKSLIKLAPLRKTLGIRTVFNQLGPLVNPLRPNAQVLGVASEDLLQPMGSALLNLGMNRAIVVHGSGGLDEASLQGKNKLVFIENGELRFSEINISDFNHENIANENLVVSDLDSNEEILKSVLNGSGQKSHMDVVALNVSLVLWAAGIEDNLNEGFNKALFSINKGDPWKKFLLLKNYLSAN.

Residues Gly86, 89–90 (GD), Thr94, 96–99 (NIST), 114–122 (KHGNKSASG), and Ser126 each bind 5-phospho-alpha-D-ribose 1-diphosphate. Gly86 provides a ligand contact to anthranilate. Residue Ser98 participates in Mg(2+) binding. Asn117 serves as a coordination point for anthranilate. Anthranilate is bound at residue Arg172. Mg(2+) contacts are provided by Asp231 and Glu232.

Belongs to the anthranilate phosphoribosyltransferase family. Homodimer. Mg(2+) serves as cofactor.

It carries out the reaction N-(5-phospho-beta-D-ribosyl)anthranilate + diphosphate = 5-phospho-alpha-D-ribose 1-diphosphate + anthranilate. It participates in amino-acid biosynthesis; L-tryptophan biosynthesis; L-tryptophan from chorismate: step 2/5. Its function is as follows. Catalyzes the transfer of the phosphoribosyl group of 5-phosphorylribose-1-pyrophosphate (PRPP) to anthranilate to yield N-(5'-phosphoribosyl)-anthranilate (PRA). In Prochlorococcus marinus (strain MIT 9301), this protein is Anthranilate phosphoribosyltransferase.